Reading from the N-terminus, the 658-residue chain is UvrABC system protein B (658 aa).

The region spanning 25–178 (KSLKNNNHYQ…KNFLLKLVEM (154 aa)) is the Helicase ATP-binding domain. An ATP-binding site is contributed by 38 to 45 (GVTGSGKT). The Beta-hairpin signature appears at 91–114 (HFDYYQPESYIPRRDLFIEKDSSI). Positions 433 to 607 (QVQDLFDEIK…ELKLRDDEIR (175 aa)) constitute a Helicase C-terminal domain. The region spanning 623 to 658 (EKIIKELDKKMRECAKNLDFEEAMRLRDEIAKLRTL) is the UVR domain.

The protein belongs to the UvrB family. In terms of assembly, forms a heterotetramer with UvrA during the search for lesions. Interacts with UvrC in an incision complex.

The protein resides in the cytoplasm. In terms of biological role, the UvrABC repair system catalyzes the recognition and processing of DNA lesions. A damage recognition complex composed of 2 UvrA and 2 UvrB subunits scans DNA for abnormalities. Upon binding of the UvrA(2)B(2) complex to a putative damaged site, the DNA wraps around one UvrB monomer. DNA wrap is dependent on ATP binding by UvrB and probably causes local melting of the DNA helix, facilitating insertion of UvrB beta-hairpin between the DNA strands. Then UvrB probes one DNA strand for the presence of a lesion. If a lesion is found the UvrA subunits dissociate and the UvrB-DNA preincision complex is formed. This complex is subsequently bound by UvrC and the second UvrB is released. If no lesion is found, the DNA wraps around the other UvrB subunit that will check the other stand for damage. In Helicobacter pylori (strain HPAG1), this protein is UvrABC system protein B.